The following is a 1199-amino-acid chain: DNA-directed RNA polymerase subunit beta' (1199 aa).

Residues C60, C62, C75, and C78 each coordinate Zn(2+). Positions 449, 451, and 453 each coordinate Mg(2+). Positions 818, 892, 899, and 902 each coordinate Zn(2+).

This sequence belongs to the RNA polymerase beta' chain family. The RNAP catalytic core consists of 2 alpha, 1 beta, 1 beta' and 1 omega subunit. When a sigma factor is associated with the core the holoenzyme is formed, which can initiate transcription. It depends on Mg(2+) as a cofactor. Requires Zn(2+) as cofactor.

The catalysed reaction is RNA(n) + a ribonucleoside 5'-triphosphate = RNA(n+1) + diphosphate. DNA-dependent RNA polymerase catalyzes the transcription of DNA into RNA using the four ribonucleoside triphosphates as substrates. In Bacillus pumilus (strain SAFR-032), this protein is DNA-directed RNA polymerase subunit beta'.